The following is a 94-amino-acid chain: Pyrimidine/purine nucleoside phosphorylase (94 aa).

The protein belongs to the nucleoside phosphorylase PpnP family.

The catalysed reaction is a purine D-ribonucleoside + phosphate = a purine nucleobase + alpha-D-ribose 1-phosphate. The enzyme catalyses adenosine + phosphate = alpha-D-ribose 1-phosphate + adenine. It carries out the reaction cytidine + phosphate = cytosine + alpha-D-ribose 1-phosphate. It catalyses the reaction guanosine + phosphate = alpha-D-ribose 1-phosphate + guanine. The catalysed reaction is inosine + phosphate = alpha-D-ribose 1-phosphate + hypoxanthine. The enzyme catalyses thymidine + phosphate = 2-deoxy-alpha-D-ribose 1-phosphate + thymine. It carries out the reaction uridine + phosphate = alpha-D-ribose 1-phosphate + uracil. It catalyses the reaction xanthosine + phosphate = alpha-D-ribose 1-phosphate + xanthine. Catalyzes the phosphorolysis of diverse nucleosides, yielding D-ribose 1-phosphate and the respective free bases. Can use uridine, adenosine, guanosine, cytidine, thymidine, inosine and xanthosine as substrates. Also catalyzes the reverse reactions. This Pseudomonas fluorescens (strain ATCC BAA-477 / NRRL B-23932 / Pf-5) protein is Pyrimidine/purine nucleoside phosphorylase.